The primary structure comprises 123 residues: Fluoride-specific ion channel FluC 1 (123 aa).

The next 4 helical transmembrane spans lie at 1–21, 34–54, 59–79, and 99–119; these read MVDL…RYTL, PLAT…LYGF, VIWL…STYI, and LTSI…ANFF. Na(+) contacts are provided by Gly70 and Thr73.

The protein belongs to the fluoride channel Fluc/FEX (TC 1.A.43) family.

The protein resides in the cell membrane. The catalysed reaction is fluoride(in) = fluoride(out). Its activity is regulated as follows. Na(+) is not transported, but it plays an essential structural role and its presence is essential for fluoride channel function. Fluoride-specific ion channel. Important for reducing fluoride concentration in the cell, thus reducing its toxicity. The protein is Fluoride-specific ion channel FluC 1 of Carboxydothermus hydrogenoformans (strain ATCC BAA-161 / DSM 6008 / Z-2901).